Here is a 188-residue protein sequence, read N- to C-terminus: Peptide deformylase (188 aa).

Positions 109 and 152 each coordinate Fe cation. E153 is an active-site residue. A Fe cation-binding site is contributed by H156.

The protein belongs to the polypeptide deformylase family. Requires Fe(2+) as cofactor.

The enzyme catalyses N-terminal N-formyl-L-methionyl-[peptide] + H2O = N-terminal L-methionyl-[peptide] + formate. In terms of biological role, removes the formyl group from the N-terminal Met of newly synthesized proteins. Requires at least a dipeptide for an efficient rate of reaction. N-terminal L-methionine is a prerequisite for activity but the enzyme has broad specificity at other positions. The protein is Peptide deformylase of Chloroflexus aurantiacus (strain ATCC 29366 / DSM 635 / J-10-fl).